We begin with the raw amino-acid sequence, 115 residues long: U3-lycotoxin-Ls1v (115 aa).

The N-terminal stretch at 1-20 is a signal peptide; sequence MKFVLLFGVLLVTLFSHSSA. Residues 21 to 44 constitute a propeptide that is removed on maturation; the sequence is EMLDDFDQADEDELLSLIEKEEAR. Disulfide bonds link Cys-48–Cys-63, Cys-55–Cys-72, Cys-62–Cys-87, and Cys-74–Cys-85.

This sequence belongs to the neurotoxin 19 (CSTX) family. 01 subfamily. Expressed by the venom gland.

It localises to the secreted. The protein is U3-lycotoxin-Ls1v of Lycosa singoriensis (Wolf spider).